A 187-amino-acid polypeptide reads, in one-letter code: Elongation factor P (187 aa).

It belongs to the elongation factor P family.

It is found in the cytoplasm. The protein operates within protein biosynthesis; polypeptide chain elongation. Functionally, involved in peptide bond synthesis. Stimulates efficient translation and peptide-bond synthesis on native or reconstituted 70S ribosomes in vitro. Probably functions indirectly by altering the affinity of the ribosome for aminoacyl-tRNA, thus increasing their reactivity as acceptors for peptidyl transferase. The polypeptide is Elongation factor P (Roseiflexus castenholzii (strain DSM 13941 / HLO8)).